A 409-amino-acid chain; its full sequence is Dual-specificity RNA methyltransferase RlmN (409 aa).

Glu126 (proton acceptor) is an active-site residue. The Radical SAM core domain maps to 132–373; the sequence is EEGRGTLCLS…NQAGYASPIR (242 aa). A disulfide bridge links Cys139 with Cys384. [4Fe-4S] cluster contacts are provided by Cys146, Cys150, and Cys153. S-adenosyl-L-methionine is bound by residues 210–211, Ser242, 264–266, and Asn341; these read GE and SLH. Residue Cys384 is the S-methylcysteine intermediate of the active site.

It belongs to the radical SAM superfamily. RlmN family. [4Fe-4S] cluster serves as cofactor.

It is found in the cytoplasm. It catalyses the reaction adenosine(2503) in 23S rRNA + 2 reduced [2Fe-2S]-[ferredoxin] + 2 S-adenosyl-L-methionine = 2-methyladenosine(2503) in 23S rRNA + 5'-deoxyadenosine + L-methionine + 2 oxidized [2Fe-2S]-[ferredoxin] + S-adenosyl-L-homocysteine. The enzyme catalyses adenosine(37) in tRNA + 2 reduced [2Fe-2S]-[ferredoxin] + 2 S-adenosyl-L-methionine = 2-methyladenosine(37) in tRNA + 5'-deoxyadenosine + L-methionine + 2 oxidized [2Fe-2S]-[ferredoxin] + S-adenosyl-L-homocysteine. In terms of biological role, specifically methylates position 2 of adenine 2503 in 23S rRNA and position 2 of adenine 37 in tRNAs. m2A2503 modification seems to play a crucial role in the proofreading step occurring at the peptidyl transferase center and thus would serve to optimize ribosomal fidelity. In Bartonella quintana (strain Toulouse) (Rochalimaea quintana), this protein is Dual-specificity RNA methyltransferase RlmN.